The following is a 138-amino-acid chain: Large ribosomal subunit protein eL32 (138 aa).

This sequence belongs to the eukaryotic ribosomal protein eL32 family.

This Saccharolobus islandicus (strain Y.N.15.51 / Yellowstone #2) (Sulfolobus islandicus) protein is Large ribosomal subunit protein eL32.